The sequence spans 419 residues: Serine--tRNA ligase (419 aa).

225–227 (TAE) provides a ligand contact to L-serine. Residue 256-258 (RKE) coordinates ATP. Glu279 is a binding site for L-serine. 343–346 (EISS) lines the ATP pocket. Ser378 contacts L-serine.

This sequence belongs to the class-II aminoacyl-tRNA synthetase family. Type-1 seryl-tRNA synthetase subfamily. As to quaternary structure, homodimer. The tRNA molecule binds across the dimer.

Its subcellular location is the cytoplasm. It carries out the reaction tRNA(Ser) + L-serine + ATP = L-seryl-tRNA(Ser) + AMP + diphosphate + H(+). The catalysed reaction is tRNA(Sec) + L-serine + ATP = L-seryl-tRNA(Sec) + AMP + diphosphate + H(+). It functions in the pathway aminoacyl-tRNA biosynthesis; selenocysteinyl-tRNA(Sec) biosynthesis; L-seryl-tRNA(Sec) from L-serine and tRNA(Sec): step 1/1. In terms of biological role, catalyzes the attachment of serine to tRNA(Ser). Is also able to aminoacylate tRNA(Sec) with serine, to form the misacylated tRNA L-seryl-tRNA(Sec), which will be further converted into selenocysteinyl-tRNA(Sec). The sequence is that of Serine--tRNA ligase from Pelagibacter ubique (strain HTCC1062).